Here is an 870-residue protein sequence, read N- to C-terminus: Protein csx2 (870 aa).

Positions 212–251 (TSPEISDAPPLSGNVDPLPINSPPLTNPVARDIDQTEPED) are disordered. Residues 510–614 (TSAKQGLLLA…WIEAIQYSIS (105 aa)) form the PH domain. Phosphoserine is present on residues serine 625, serine 653, and serine 655. Residues 647-672 (RVASVTSPSRHNSDSKEKKQTKSPSL) are disordered. A compositionally biased stretch (basic and acidic residues) spans 657–666 (HNSDSKEKKQ). Residues 670–791 (PSLVKTLKEM…RFIKSSFSHD (122 aa)) form the Arf-GAP domain. A C4-type zinc finger spans residues 686-710 (CADCNTTARVEWCAINFPVVLCIDC).

This is Protein csx2 (csx2) from Schizosaccharomyces pombe (strain 972 / ATCC 24843) (Fission yeast).